Reading from the N-terminus, the 179-residue chain is Cytochrome b6-f complex iron-sulfur subunit (179 aa).

The helical transmembrane segment at 20 to 42 (LLTFGTITGVAAGALYPIVKYFI) threads the bilayer. The region spanning 60-161 (GNDVIVSQFL…ANVTDNDKVV (102 aa)) is the Rieske domain. [2Fe-2S] cluster-binding residues include cysteine 107, histidine 109, cysteine 125, and histidine 128. An intrachain disulfide couples cysteine 112 to cysteine 127.

Belongs to the Rieske iron-sulfur protein family. In terms of assembly, the 4 large subunits of the cytochrome b6-f complex are cytochrome b6, subunit IV (17 kDa polypeptide, PetD), cytochrome f and the Rieske protein, while the 4 small subunits are PetG, PetL, PetM and PetN. The complex functions as a dimer. [2Fe-2S] cluster serves as cofactor.

It localises to the cellular thylakoid membrane. The catalysed reaction is 2 oxidized [plastocyanin] + a plastoquinol + 2 H(+)(in) = 2 reduced [plastocyanin] + a plastoquinone + 4 H(+)(out). Component of the cytochrome b6-f complex, which mediates electron transfer between photosystem II (PSII) and photosystem I (PSI), cyclic electron flow around PSI, and state transitions. In Microcystis aeruginosa (strain NIES-843 / IAM M-2473), this protein is Cytochrome b6-f complex iron-sulfur subunit.